Reading from the N-terminus, the 299-residue chain is UDP-N-acetylenolpyruvoylglucosamine reductase (299 aa).

Residues 29–193 form the FAD-binding PCMH-type domain; it reads RIGGPAEIFL…TAASLRFRKA (165 aa). The active site involves R173. Catalysis depends on S222, which acts as the Proton donor. The active site involves E292.

It belongs to the MurB family. FAD is required as a cofactor.

It localises to the cytoplasm. The enzyme catalyses UDP-N-acetyl-alpha-D-muramate + NADP(+) = UDP-N-acetyl-3-O-(1-carboxyvinyl)-alpha-D-glucosamine + NADPH + H(+). The protein operates within cell wall biogenesis; peptidoglycan biosynthesis. Functionally, cell wall formation. The chain is UDP-N-acetylenolpyruvoylglucosamine reductase from Syntrophotalea carbinolica (strain DSM 2380 / NBRC 103641 / GraBd1) (Pelobacter carbinolicus).